The following is a 357-amino-acid chain: RNA-binding protein 43 (357 aa).

Residues arginine 15–aspartate 104 form the RRM domain.

The sequence is that of RNA-binding protein 43 (RBM43) from Homo sapiens (Human).